We begin with the raw amino-acid sequence, 183 residues long: Guanylate kinase (183 aa).

In terms of domain architecture, Guanylate kinase-like spans 4–182 (GRVVVLTGPS…AITALEAAIF (179 aa)). An ATP-binding site is contributed by 11-18 (GPSGVGKG).

The protein belongs to the guanylate kinase family.

It is found in the cytoplasm. It carries out the reaction GMP + ATP = GDP + ADP. The enzyme catalyses dZMP + ATP = dZDP + ADP. Its pathway is purine metabolism. Essential for recycling GMP and indirectly, cGMP. Its function is as follows. (Microbial infection) Catalyzes the phosphorylation of dZMP to dZDP, when the bacterium is infected by a phage that produces the substrate for the synthesis of dZTP (2- amino-2'-deoxyadenosine 5'-triphosphate), which is then used by the phage as a DNA polymerase substrate. This is Guanylate kinase from Synechococcus elongatus (strain ATCC 33912 / PCC 7942 / FACHB-805) (Anacystis nidulans R2).